The primary structure comprises 252 residues: Ribosomal RNA small subunit methyltransferase J (252 aa).

Residues 104–105, 120–121, and Asp174 contribute to the S-adenosyl-L-methionine site; these read RD and ER.

The protein belongs to the methyltransferase superfamily. RsmJ family.

Its subcellular location is the cytoplasm. The enzyme catalyses guanosine(1516) in 16S rRNA + S-adenosyl-L-methionine = N(2)-methylguanosine(1516) in 16S rRNA + S-adenosyl-L-homocysteine + H(+). Its function is as follows. Specifically methylates the guanosine in position 1516 of 16S rRNA. The protein is Ribosomal RNA small subunit methyltransferase J of Mannheimia succiniciproducens (strain KCTC 0769BP / MBEL55E).